The following is a 252-amino-acid chain: Phosphate import ATP-binding protein PstB (252 aa).

In terms of domain architecture, ABC transporter spans Ile6–Ile247. ATP is bound at residue Gly38 to Ser45.

This sequence belongs to the ABC transporter superfamily. Phosphate importer (TC 3.A.1.7) family. As to quaternary structure, the complex is composed of two ATP-binding proteins (PstB), two transmembrane proteins (PstC and PstA) and a solute-binding protein (PstS).

The protein resides in the cell membrane. The enzyme catalyses phosphate(out) + ATP + H2O = ADP + 2 phosphate(in) + H(+). Part of the ABC transporter complex PstSACB involved in phosphate import. Responsible for energy coupling to the transport system. The polypeptide is Phosphate import ATP-binding protein PstB (Moorella thermoacetica (strain ATCC 39073 / JCM 9320)).